The primary structure comprises 436 residues: Protein arginine methyltransferase NDUFAF7, mitochondrial (436 aa).

The N-terminal 41 residues, 1–41 (MNALVRRCVARAGLPCIWRGKCYSSGNEPAESNQVTPMLRH), are a transit peptide targeting the mitochondrion. The tract at residues 411-436 (GSQERNACQSKTPSSSVAGFDELVWQ) is disordered. Over residues 413-427 (QERNACQSKTPSSSV) the composition is skewed to polar residues.

The protein belongs to the NDUFAF7 family. As to quaternary structure, interacts with NDUFS2.

It localises to the mitochondrion. It catalyses the reaction L-arginyl-[protein] + 2 S-adenosyl-L-methionine = N(omega),N(omega)'-dimethyl-L-arginyl-[protein] + 2 S-adenosyl-L-homocysteine + 2 H(+). In terms of biological role, arginine methyltransferase involved in the assembly or stability of mitochondrial NADH:ubiquinone oxidoreductase complex (complex I). Acts by mediating symmetric dimethylation of 'Arg-118' of NDUFS2 after it assembles into the complex I, stabilizing the early intermediate complex. In Mus musculus (Mouse), this protein is Protein arginine methyltransferase NDUFAF7, mitochondrial.